The primary structure comprises 138 residues: Thyrotropin subunit beta (138 aa).

The N-terminal stretch at 1–20 (MTAIFLMSMLFGLACGQAMS) is a signal peptide. Intrachain disulfides connect Cys-22/Cys-72, Cys-36/Cys-87, Cys-39/Cys-125, Cys-47/Cys-103, Cys-51/Cys-105, and Cys-108/Cys-115. Asn-43 carries an N-linked (GlcNAc...) asparagine glycan. The propeptide occupies 133-138 (VLEFSI).

The protein belongs to the glycoprotein hormones subunit beta family. Heterodimer of a common alpha chain and a unique beta chain which confers biological specificity to thyrotropin, lutropin, follitropin and gonadotropin.

The protein resides in the secreted. Its function is as follows. Indispensable for the control of thyroid structure and metabolism. In Sus scrofa (Pig), this protein is Thyrotropin subunit beta (TSHB).